We begin with the raw amino-acid sequence, 313 residues long: Homeobox protein CDX-2 (313 aa).

Ser60 is modified (phosphoserine). The tract at residues His113–Glu153 is disordered. Basic residues predominate over residues Ala114 to His124. The segment at Lys185–Lys215 is interaction with DNA. The segment at residues Lys185 to Asn244 is a DNA-binding region (homeobox). An interaction with 5-mCpG DNA region spans residues Arg227–Arg241. The tract at residues Lys242–Gln313 is disordered. Composition is skewed to low complexity over residues Gln249 to Ala261 and Gln271 to Leu300. Ser283 carries the post-translational modification Phosphoserine. The short motif at Ser283 to Ser295 is the 4S motif; modulates transactivation activity and protein stability element.

Belongs to the Caudal homeobox family. Can bind DNA as a monomer or homodimer. Post-translationally, ubiquitinated, leading to its degradation by the proteasome. In terms of processing, phosphorylation at Ser-60 reduces transactivation capacity. Phosphorylation at Ser-283 reduces transactivation capacity and also increases ubiquitin-dependent proteasome degradation. Expressed in the intestine.

It is found in the nucleus. Its function is as follows. Transcription factor which regulates the transcription of multiple genes expressed in the intestinal epithelium. Binds to the promoter of the intestinal sucrase-isomaltase SI and activates SI transcription. Binds to the DNA sequence 5'-ATAAAAACTTAT-3' in the promoter region of VDR and activates VDR transcription. Binds to and activates transcription of LPH. Activates transcription of CLDN2 and intestinal mucin MUC2. Binds to the 5'-AATTTTTTACAACACCT-3' DNA sequence in the promoter region of CA1 and activates CA1 transcription. Important in broad range of functions from early differentiation to maintenance of the intestinal epithelial lining of both the small and large intestine. Binds preferentially to methylated DNA. In Mesocricetus auratus (Golden hamster), this protein is Homeobox protein CDX-2 (CDX2).